The following is a 335-amino-acid chain: Methionine import ATP-binding protein MetN (335 aa).

The region spanning 2–241 is the ABC transporter domain; sequence IQFQRLHKSY…PKHATTRRFV (240 aa). Residue 38–45 coordinates ATP; it reads GHSGAGKS.

Belongs to the ABC transporter superfamily. Methionine importer (TC 3.A.1.24) family. In terms of assembly, the complex is composed of two ATP-binding proteins (MetN), two transmembrane proteins (MetI) and a solute-binding protein (MetQ).

It localises to the cell inner membrane. The catalysed reaction is L-methionine(out) + ATP + H2O = L-methionine(in) + ADP + phosphate + H(+). The enzyme catalyses D-methionine(out) + ATP + H2O = D-methionine(in) + ADP + phosphate + H(+). Part of the ABC transporter complex MetNIQ involved in methionine import. Responsible for energy coupling to the transport system. The chain is Methionine import ATP-binding protein MetN from Xanthomonas axonopodis pv. citri (strain 306).